A 256-amino-acid polypeptide reads, in one-letter code: MLILLSCAKTIGIPKRLPSHLTTTSPIFDEQTTKIALAASSCDIKELSRLLRINRKLAEENHRRWQHFFEDDSPTAPAALAYTGMVFKKLAPANFNADDWLYASEHLLITSFLYGLLRPSDMIRPYRMEGFAHLGAPVEDEVFNFWRPYLTDFLIEKVREKGGELCFLASEEMKMLFDWKRVEQAVRVVTPLFKVPQPDGGLKQIVIYTKMARGLMTAHLLTRRCRHVEEMQLFSPEGFIFRPELSDESNYLFVME.

It belongs to the UPF0246 family.

In Porphyromonas gingivalis (strain ATCC BAA-308 / W83), this protein is UPF0246 protein PG_1544.